Consider the following 284-residue polypeptide: GPN-loop GTPase 3 (284 aa).

13–18 (GSGKST) lines the GTP pocket. Residues 72–74 (GPN) carry the Gly-Pro-Asn (GPN)-loop; involved in dimer interface motif. 174 to 177 (TKMD) contacts GTP. The disordered stretch occupies residues 261–284 (KEPKEHEEESSSMFDEYFQERQNE).

Belongs to the GPN-loop GTPase family. In terms of assembly, heterodimer with GPN1. Binds to RNA polymerase II (RNAPII). Interacts directly with subunits RPB4 and RPB7 and the CTD of RPB1.

In terms of biological role, small GTPase required for proper localization of RNA polymerase II (RNAPII). May act at an RNAP assembly step prior to nuclear import. The sequence is that of GPN-loop GTPase 3 from Rattus norvegicus (Rat).